Here is a 361-residue protein sequence, read N- to C-terminus: 3-dehydroquinate synthase (361 aa).

It belongs to the archaeal-type DHQ synthase family.

The enzyme catalyses 2-amino-2,3,7-trideoxy-D-lyxo-hept-6-ulosonate + NAD(+) + H2O = 3-dehydroquinate + NH4(+) + NADH + H(+). Catalyzes the oxidative deamination and cyclization of 2-amino-3,7-dideoxy-D-threo-hept-6-ulosonic acid (ADH) to yield 3-dehydroquinate (DHQ), which is fed into the canonical shikimic pathway of aromatic amino acid biosynthesis. The protein is 3-dehydroquinate synthase of Methanococcus maripaludis (strain DSM 14266 / JCM 13030 / NBRC 101832 / S2 / LL).